A 529-amino-acid polypeptide reads, in one-letter code: Zinc finger protein 572 (529 aa).

The disordered stretch occupies residues 1–125 (MEQEQKLLVS…TGPAGQQNPS (125 aa)). A Glycyl lysine isopeptide (Lys-Gly) (interchain with G-Cter in SUMO2) cross-link involves residue Lys-6. Over residues 22 to 42 (KNTITGDESKNNLKTVQFSNS) the composition is skewed to polar residues. The span at 43–68 (KADKERASKWSRSDGPENYKDEDTKE) shows a compositional bias: basic and acidic residues. Over residues 87–96 (NDSNLGSQRN) the composition is skewed to polar residues. 12 consecutive C2H2-type zinc fingers follow at residues 131–153 (YKCS…QRTH), 159–181 (YRCS…LRTH), 187–209 (YQCG…ERTH), 215–237 (YKCP…HRSH), 243–265 (YECP…QRTH), 271–293 (YKCP…QRTH), 299–321 (YKCP…QRIH), 327–349 (YQCI…QKMH), 383–405 (YKCC…QRTH), 411–433 (YRCS…QRTH), 439–461 (YKCP…RRTH), and 467–489 (YKCT…RKIH).

Belongs to the krueppel C2H2-type zinc-finger protein family.

It is found in the nucleus. In terms of biological role, may be involved in transcriptional regulation. The sequence is that of Zinc finger protein 572 (ZNF572) from Bos taurus (Bovine).